We begin with the raw amino-acid sequence, 469 residues long: Neuraminidase (469 aa).

Over Met-1–Thr-9 the chain is Intravirion. A helical membrane pass occupies residues Ile-10–Val-30. The segment at Gly-11–Val-33 is involved in apical transport and lipid raft association. Residues Thr-31–Ile-469 are Virion surface-facing. The interval His-36–Ser-88 is hypervariable stalk region. Asn-61, Asn-70, and Asn-86 each carry an N-linked (GlcNAc...) asparagine; by host glycan. The head of neuraminidase stretch occupies residues Gln-91–Ile-469. 8 disulfides stabilise this stretch: Cys-92-Cys-417, Cys-124-Cys-129, Cys-183-Cys-230, Cys-232-Cys-237, Cys-278-Cys-291, Cys-280-Cys-289, Cys-318-Cys-337, and Cys-421-Cys-447. Residue Arg-118 coordinates substrate. An N-linked (GlcNAc...) asparagine; by host glycan is attached at Asn-146. The active-site Proton donor/acceptor is the Asp-151. Residue Arg-152 coordinates substrate. N-linked (GlcNAc...) asparagine; by host glycosylation is found at Asn-200 and Asn-234. Glu-276–Glu-277 is a substrate binding site. Arg-292 is a binding site for substrate. 3 residues coordinate Ca(2+): Asp-293, Gly-297, and Asp-324. Arg-371 contacts substrate. N-linked (GlcNAc...) asparagine; by host glycosylation is present at Asn-402. Tyr-406 serves as the catalytic Nucleophile.

This sequence belongs to the glycosyl hydrolase 34 family. As to quaternary structure, homotetramer. The cofactor is Ca(2+). N-glycosylated.

It is found in the virion membrane. Its subcellular location is the host apical cell membrane. It catalyses the reaction Hydrolysis of alpha-(2-&gt;3)-, alpha-(2-&gt;6)-, alpha-(2-&gt;8)- glycosidic linkages of terminal sialic acid residues in oligosaccharides, glycoproteins, glycolipids, colominic acid and synthetic substrates.. Its activity is regulated as follows. Inhibited by the neuraminidase inhibitors zanamivir (Relenza) and oseltamivir (Tamiflu). These drugs interfere with the release of progeny virus from infected cells and are effective against all influenza strains. Resistance to neuraminidase inhibitors is quite rare. Catalyzes the removal of terminal sialic acid residues from viral and cellular glycoconjugates. Cleaves off the terminal sialic acids on the glycosylated HA during virus budding to facilitate virus release. Additionally helps virus spread through the circulation by further removing sialic acids from the cell surface. These cleavages prevent self-aggregation and ensure the efficient spread of the progeny virus from cell to cell. Otherwise, infection would be limited to one round of replication. Described as a receptor-destroying enzyme because it cleaves a terminal sialic acid from the cellular receptors. May facilitate viral invasion of the upper airways by cleaving the sialic acid moieties on the mucin of the airway epithelial cells. Likely to plays a role in the budding process through its association with lipid rafts during intracellular transport. May additionally display a raft-association independent effect on budding. Plays a role in the determination of host range restriction on replication and virulence. Sialidase activity in late endosome/lysosome traffic seems to enhance virus replication. This Aves (whales) protein is Neuraminidase.